A 228-amino-acid chain; its full sequence is PKHD-type hydroxylase Rmet_0838 (228 aa).

Residues 78–179 enclose the Fe2OG dioxygenase domain; it reads RVLPPMFNRY…RWASFFWAQS (102 aa). Fe cation-binding residues include H96, D98, and H160. 2-oxoglutarate is bound at residue R170.

It depends on Fe(2+) as a cofactor. The cofactor is L-ascorbate.

This Cupriavidus metallidurans (strain ATCC 43123 / DSM 2839 / NBRC 102507 / CH34) (Ralstonia metallidurans) protein is PKHD-type hydroxylase Rmet_0838.